The following is a 147-amino-acid chain: MAMGMFDKILGFIGFDETEEQQVDREREAVEKTETLQQIKRKNAQVVSIHSGRQLRVVVCDPASFDEAQNIADNLKNRRAVVVNLEKAGAEQARRIVDFISGATAALNGDMQKVGQNIFLFVPSNIDIANDTARETKEKSIFAWAKS.

The protein belongs to the SepF family. As to quaternary structure, homodimer. Interacts with FtsZ.

Its subcellular location is the cytoplasm. In terms of biological role, cell division protein that is part of the divisome complex and is recruited early to the Z-ring. Probably stimulates Z-ring formation, perhaps through the cross-linking of FtsZ protofilaments. Its function overlaps with FtsA. In Desulforamulus reducens (strain ATCC BAA-1160 / DSM 100696 / MI-1) (Desulfotomaculum reducens), this protein is Cell division protein SepF 1.